The primary structure comprises 473 residues: Glutamate--tRNA ligase 2 (473 aa).

The 'HIGH' region signature appears at 11–21 (PSPTGYLHIGG). Basic and acidic residues predominate over residues 113–133 (KARAEGRPPRYDGRWRDRDPS). The segment at 113-136 (KARAEGRPPRYDGRWRDRDPSEAP) is disordered. Positions 240-244 (KLSKR) match the 'KMSKS' region motif. Lys243 is a binding site for ATP.

The protein belongs to the class-I aminoacyl-tRNA synthetase family. Glutamate--tRNA ligase type 1 subfamily. As to quaternary structure, monomer.

Its subcellular location is the cytoplasm. It carries out the reaction tRNA(Glu) + L-glutamate + ATP = L-glutamyl-tRNA(Glu) + AMP + diphosphate. Catalyzes the attachment of glutamate to tRNA(Glu) in a two-step reaction: glutamate is first activated by ATP to form Glu-AMP and then transferred to the acceptor end of tRNA(Glu). This is Glutamate--tRNA ligase 2 from Brucella suis biovar 1 (strain 1330).